The chain runs to 165 residues: Chorismate pyruvate-lyase (165 aa).

4 residues coordinate substrate: Met-35, Arg-77, Leu-115, and Glu-156.

It belongs to the UbiC family. In terms of assembly, monomer.

It is found in the cytoplasm. The enzyme catalyses chorismate = 4-hydroxybenzoate + pyruvate. The protein operates within cofactor biosynthesis; ubiquinone biosynthesis. Functionally, removes the pyruvyl group from chorismate, with concomitant aromatization of the ring, to provide 4-hydroxybenzoate (4HB) for the ubiquinone pathway. In Shigella dysenteriae serotype 1 (strain Sd197), this protein is Chorismate pyruvate-lyase.